The sequence spans 509 residues: Cytochrome P450 4X1 (509 aa).

A helical transmembrane segment spans residues phenylalanine 14 to leucine 34. Position 454 (cysteine 454) interacts with heme.

It belongs to the cytochrome P450 family. The cofactor is heme. Expressed in brain, heart, kidney and skin and, at lower levels, in skeletal muscle and liver. In the brain, high levels are detected in amygdala and lower levels in globus pallidus and cerebellum. In the heart, very high levels in aorta, but very low levels in other heart regions. Also expressed in breast, prostate and colon.

The protein resides in the endoplasmic reticulum membrane. The protein localises to the microsome membrane. It catalyses the reaction N-(5Z,8Z,11Z,14Z-eicosatetraenoyl)-ethanolamine + reduced [NADPH--hemoprotein reductase] + O2 = N-(14,15-epoxy-5Z,8Z,11Z-eicosatrienoyl)-ethanolamine + oxidized [NADPH--hemoprotein reductase] + H2O + H(+). A cytochrome P450 monooxygenase that selectively catalyzes the epoxidation of the last double bond of the arachidonoyl moiety of anandamide, potentially modulating endocannabinoid signaling. Has no hydroxylase activity toward various fatty acids, steroids and prostaglandins. Mechanistically, uses molecular oxygen inserting one oxygen atom into a substrate, and reducing the second into a water molecule, with two electrons provided by NADPH via cytochrome P450 reductase (CPR; NADPH-ferrihemoprotein reductase). This Homo sapiens (Human) protein is Cytochrome P450 4X1.